A 622-amino-acid chain; its full sequence is WD repeat-containing protein 46 (622 aa).

The disordered stretch occupies residues Met-1 to Glu-135. Ser-41 carries the post-translational modification Phosphoserine. The span at Glu-106 to Lys-118 shows a compositional bias: basic and acidic residues. WD repeat units lie at residues Leu-192–Asn-233, Val-234–Ile-271, Val-314–Lys-353, Cys-356–Ser-395, and Thr-398–Ser-435. The disordered stretch occupies residues Ala-547 to Pro-622. Positions Val-571–Gln-582 are enriched in basic and acidic residues.

Part of the small subunit (SSU) processome, composed of more than 70 proteins and the RNA chaperone small nucleolar RNA (snoRNA) U3. Interacts with DDX21, NCL, NOP2 and EBNA1BP2.

The protein resides in the nucleus. It is found in the nucleolus. Scaffold component of the nucleolar structure. Required for localization of DDX21 and NCL to the granular compartment of the nucleolus. Part of the small subunit (SSU) processome, first precursor of the small eukaryotic ribosomal subunit. During the assembly of the SSU processome in the nucleolus, many ribosome biogenesis factors, an RNA chaperone and ribosomal proteins associate with the nascent pre-rRNA and work in concert to generate RNA folding, modifications, rearrangements and cleavage as well as targeted degradation of pre-ribosomal RNA by the RNA exosome. This chain is WD repeat-containing protein 46 (Wdr46), found in Mus musculus (Mouse).